Here is a 193-residue protein sequence, read N- to C-terminus: 3-isopropylmalate dehydratase small subunit (193 aa).

Belongs to the LeuD family. LeuD type 1 subfamily. As to quaternary structure, heterodimer of LeuC and LeuD.

It catalyses the reaction (2R,3S)-3-isopropylmalate = (2S)-2-isopropylmalate. Its pathway is amino-acid biosynthesis; L-leucine biosynthesis; L-leucine from 3-methyl-2-oxobutanoate: step 2/4. Catalyzes the isomerization between 2-isopropylmalate and 3-isopropylmalate, via the formation of 2-isopropylmaleate. The chain is 3-isopropylmalate dehydratase small subunit from Bacillus cereus (strain AH820).